We begin with the raw amino-acid sequence, 940 residues long: Protein translocase subunit SecA (940 aa).

Residues Gln-87, 105-109 (GEGKT), and Asp-494 each bind ATP. Positions 879–940 (AQQQKKAVEG…KCHGASEASV (62 aa)) are disordered. The span at 884 to 898 (KAVEGRATADGKLDE) shows a compositional bias: basic and acidic residues. The span at 900 to 915 (SVAAAARPAAASRPAV) shows a compositional bias: low complexity. Zn(2+) contacts are provided by Cys-921, Cys-923, Cys-932, and His-933.

The protein belongs to the SecA family. In terms of assembly, monomer and homodimer. Part of the essential Sec protein translocation apparatus which comprises SecA, SecYEG and auxiliary proteins SecDF-YajC and YidC. It depends on Zn(2+) as a cofactor.

The protein resides in the cell inner membrane. It is found in the cytoplasm. The enzyme catalyses ATP + H2O + cellular proteinSide 1 = ADP + phosphate + cellular proteinSide 2.. Its function is as follows. Part of the Sec protein translocase complex. Interacts with the SecYEG preprotein conducting channel. Has a central role in coupling the hydrolysis of ATP to the transfer of proteins into and across the cell membrane, serving as an ATP-driven molecular motor driving the stepwise translocation of polypeptide chains across the membrane. The chain is Protein translocase subunit SecA from Myxococcus xanthus (strain DK1622).